Here is a 211-residue protein sequence, read N- to C-terminus: FMN-dependent NADH:quinone oxidoreductase 2 (211 aa).

Residue 17–19 participates in FMN binding; it reads SYS.

The protein belongs to the azoreductase type 1 family. As to quaternary structure, homodimer. Requires FMN as cofactor.

It catalyses the reaction 2 a quinone + NADH + H(+) = 2 a 1,4-benzosemiquinone + NAD(+). It carries out the reaction N,N-dimethyl-1,4-phenylenediamine + anthranilate + 2 NAD(+) = 2-(4-dimethylaminophenyl)diazenylbenzoate + 2 NADH + 2 H(+). With respect to regulation, strongly inhibited by Pb(2+) and weakly inhibited by Cu(2+), Hg(2+) and Fe(2+). Stable in presence of Ag(+). Functionally, quinone reductase that provides resistance to thiol-specific stress caused by electrophilic quinones. Contributes to resistance to 2-methylhydroquinone (2-MHQ) and catechol. Exhibits NADH-dependent 2,6-dichloroindophenol (DCIP) oxidoreductase activity. In terms of biological role, also exhibits azoreductase activity. Catalyzes the reductive cleavage of the azo bond in aromatic azo compounds to the corresponding amines. Can reduce methyl red. The chain is FMN-dependent NADH:quinone oxidoreductase 2 from Bacillus subtilis (strain 168).